Consider the following 247-residue polypeptide: uncharacterized protein (247 aa).

Low complexity-rich tracts occupy residues 1–12 (MFSPQQPMRNYP) and 21–43 (PNQRMMGRRPPNMRGPSFGAQQQ). Disordered stretches follow at residues 1-43 (MFSP…AQQQ) and 157-247 (LSKS…RLYI). Basic and acidic residues-rich tracts occupy residues 170-196 (ESEKQSVSEESSEKEKETETKTSDGNK) and 210-229 (KTTDNKEQELKTSAPKKKEA).

This is an uncharacterized protein from Bacillus subtilis (strain 168).